Here is a 316-residue protein sequence, read N- to C-terminus: HPr kinase/phosphorylase (316 aa).

Residues His143 and Lys164 contribute to the active site. Position 158 to 165 (158 to 165) interacts with ATP; sequence GEAGSGKS. Mg(2+) is bound at residue Ser165. The Proton acceptor; for phosphorylation activity. Proton donor; for dephosphorylation activity role is filled by Asp182. The segment at 206-215 is important for the catalytic mechanism of both phosphorylation and dephosphorylation; the sequence is LEVRGLGVLN. Glu207 contacts Mg(2+). The active site involves Arg251. Residues 272-277 are important for the catalytic mechanism of dephosphorylation; that stretch reads PVMPGR.

It belongs to the HPrK/P family. Homohexamer. The cofactor is Mg(2+).

The catalysed reaction is [HPr protein]-L-serine + ATP = [HPr protein]-O-phospho-L-serine + ADP + H(+). The enzyme catalyses [HPr protein]-O-phospho-L-serine + phosphate + H(+) = [HPr protein]-L-serine + diphosphate. Its function is as follows. Catalyzes the ATP- as well as the pyrophosphate-dependent phosphorylation of a specific serine residue in HPr, a phosphocarrier protein of the phosphoenolpyruvate-dependent sugar phosphotransferase system (PTS). HprK/P also catalyzes the pyrophosphate-producing, inorganic phosphate-dependent dephosphorylation (phosphorolysis) of seryl-phosphorylated HPr (P-Ser-HPr). In Xylella fastidiosa (strain 9a5c), this protein is HPr kinase/phosphorylase.